Consider the following 422-residue polypeptide: 5'-deoxyadenosine deaminase (422 aa).

The Zn(2+) site is built by H57 and H59. Substrate is bound by residues E86 and H178. Position 205 (H205) interacts with Zn(2+). Residues E208 and D294 each contribute to the substrate site. D294 provides a ligand contact to Zn(2+).

The protein belongs to the metallo-dependent hydrolases superfamily. MTA/SAH deaminase family. In terms of assembly, homotetramer. The cofactor is Zn(2+).

The catalysed reaction is 5'-deoxyadenosine + H2O + H(+) = 5'-deoxyinosine + NH4(+). The enzyme catalyses S-adenosyl-L-homocysteine + H2O + H(+) = S-inosyl-L-homocysteine + NH4(+). It catalyses the reaction S-methyl-5'-thioadenosine + H2O + H(+) = S-methyl-5'-thioinosine + NH4(+). It carries out the reaction adenosine + H2O + H(+) = inosine + NH4(+). It participates in amino-acid biosynthesis; S-adenosyl-L-methionine biosynthesis. Functionally, catalyzes the deamination of three SAM-derived enzymatic products, namely 5'-deoxyadenosine, S-adenosyl-L-homocysteine, and 5'-methylthioadenosine, to produce the inosine analogs. Can also deaminate adenosine. The preferred substrate for this enzyme is 5'-deoxyadenosine, but all these substrates are efficiently deaminated. Likely functions in a S-adenosyl-L-methionine (SAM) recycling pathway from S-adenosyl-L-homocysteine (SAH) produced from SAM-dependent methylation reactions. May also be involved in the recycling of 5'-deoxyadenosine, whereupon the 5'-deoxyribose moiety of 5'-deoxyinosine is further metabolized to deoxyhexoses used for the biosynthesis of aromatic amino acids in methanogens. This chain is 5'-deoxyadenosine deaminase, found in Methanococcus maripaludis (strain C7 / ATCC BAA-1331).